A 154-amino-acid chain; its full sequence is Myoglobin (154 aa).

In terms of domain architecture, Globin spans 2-148; the sequence is GLSDGEWQLV…FRKDMASNYK (147 aa). At Ser-4 the chain carries Phosphoserine. Nitrite is bound at residue His-65. O2 is bound at residue His-65. A Phosphothreonine modification is found at Thr-68. His-94 is a binding site for heme b.

It belongs to the globin family. Monomeric.

Its subcellular location is the cytoplasm. The protein localises to the sarcoplasm. The enzyme catalyses Fe(III)-heme b-[protein] + nitric oxide + H2O = Fe(II)-heme b-[protein] + nitrite + 2 H(+). The catalysed reaction is H2O2 + AH2 = A + 2 H2O. Its function is as follows. Monomeric heme protein which primary function is to store oxygen and facilitate its diffusion within muscle tissues. Reversibly binds oxygen through a pentacoordinated heme iron and enables its timely and efficient release as needed during periods of heightened demand. Depending on the oxidative conditions of tissues and cells, and in addition to its ability to bind oxygen, it also has a nitrite reductase activity whereby it regulates the production of bioactive nitric oxide. Under stress conditions, like hypoxia and anoxia, it also protects cells against reactive oxygen species thanks to its pseudoperoxidase activity. This chain is Myoglobin (MB), found in Hylobates agilis (Agile gibbon).